The chain runs to 410 residues: Translation initiation factor 2 subunit gamma (410 aa).

The 198-residue stretch at 6 to 203 (QSEVNIGMVG…AIQDFIPTPE (198 aa)) folds into the tr-type G domain. Positions 15–22 (GHVDHGKT) are G1. 4 residues coordinate Mg(2+): Asp-18, Thr-22, Gly-43, and Ser-45. A GTP-binding site is contributed by 18–23 (DHGKTS). A G2 region spans residues 43 to 47 (GISIR). Residues Cys-58, Cys-61, Cys-73, and Cys-76 each contribute to the Zn(2+) site. The segment at 90–93 (DAPG) is G3. Residues 146–149 (NKID) and 181–183 (SAH) each bind GTP. The segment at 146-149 (NKID) is G4. The segment at 181-183 (SAH) is G5.

The protein belongs to the TRAFAC class translation factor GTPase superfamily. Classic translation factor GTPase family. EIF2G subfamily. In terms of assembly, heterotrimer composed of an alpha, a beta and a gamma chain. Mg(2+) is required as a cofactor.

It carries out the reaction GTP + H2O = GDP + phosphate + H(+). EIF-2 functions in the early steps of protein synthesis by forming a ternary complex with GTP and initiator tRNA. The chain is Translation initiation factor 2 subunit gamma from Methanococcus maripaludis (strain DSM 14266 / JCM 13030 / NBRC 101832 / S2 / LL).